Here is a 481-residue protein sequence, read N- to C-terminus: Tagaturonate/fructuronate epimerase (481 aa).

Catalysis depends on Asp161, which acts as the Proton acceptor. His162 is a binding site for a divalent metal cation. Glu266 serves as the catalytic Proton donor. 2 residues coordinate a divalent metal cation: Lys308 and His341.

The protein belongs to the UxaE family. A divalent metal cation is required as a cofactor.

The enzyme catalyses keto-D-tagaturonate = keto-D-fructuronate. Catalyzes the epimerization of D-tagaturonate (D-TagA) to D-fructuronate (D-FruA). In Thermotoga maritima (strain ATCC 43589 / DSM 3109 / JCM 10099 / NBRC 100826 / MSB8), this protein is Tagaturonate/fructuronate epimerase.